A 425-amino-acid chain; its full sequence is Serine--tRNA ligase (425 aa).

230–232 (TAE) lines the L-serine pocket. 261-263 (RSE) contributes to the ATP binding site. Glu284 contributes to the L-serine binding site. 348–351 (EISS) is a binding site for ATP. Residue Ser384 coordinates L-serine.

It belongs to the class-II aminoacyl-tRNA synthetase family. Type-1 seryl-tRNA synthetase subfamily. In terms of assembly, homodimer. The tRNA molecule binds across the dimer.

It localises to the cytoplasm. The catalysed reaction is tRNA(Ser) + L-serine + ATP = L-seryl-tRNA(Ser) + AMP + diphosphate + H(+). It carries out the reaction tRNA(Sec) + L-serine + ATP = L-seryl-tRNA(Sec) + AMP + diphosphate + H(+). Its pathway is aminoacyl-tRNA biosynthesis; selenocysteinyl-tRNA(Sec) biosynthesis; L-seryl-tRNA(Sec) from L-serine and tRNA(Sec): step 1/1. Catalyzes the attachment of serine to tRNA(Ser). Is also able to aminoacylate tRNA(Sec) with serine, to form the misacylated tRNA L-seryl-tRNA(Sec), which will be further converted into selenocysteinyl-tRNA(Sec). The chain is Serine--tRNA ligase from Streptococcus pyogenes serotype M28 (strain MGAS6180).